We begin with the raw amino-acid sequence, 244 residues long: B3 domain-containing protein At2g36080 (244 aa).

Positions 38-144 (FEKPLTPSDV…RFFIGWRRRG (107 aa)) form a DNA-binding region, TF-B3.

Its subcellular location is the nucleus. This is B3 domain-containing protein At2g36080 (ARF31) from Arabidopsis thaliana (Mouse-ear cress).